The sequence spans 136 residues: ATP synthase F(0) complex subunit C1, mitochondrial (136 aa).

The N-terminal 61 residues, 1–61, are a transit peptide targeting the mitochondrion; that stretch reads MQTTGALLIS…REFQTSVVSR (61 aa). The helical transmembrane segment at 77–97 threads the bilayer; that stretch reads VGVAGSGAGIGTVFGSLIIGY. The residue at position 104 (K104) is an N6,N6,N6-trimethyllysine. A helical transmembrane segment spans residues 112-132; it reads ILGFALSEAMGLFCLMVAFLI.

The protein belongs to the ATPase C chain family. In terms of assembly, homooctamer; the c-ring consists of eight c subunits forming a circle, and each subunit adopts a hairpin shape. Component of the ATP synthase complex composed at least of ATP5F1A/subunit alpha, ATP5F1B/subunit beta, ATP5MC1/subunit c (homooctomer), MT-ATP6/subunit a, MT-ATP8/subunit 8, ATP5ME/subunit e, ATP5MF/subunit f, ATP5MG/subunit g, ATP5MK/subunit k, ATP5MJ/subunit j, ATP5F1C/subunit gamma, ATP5F1D/subunit delta, ATP5F1E/subunit epsilon, ATP5PF/subunit F6, ATP5PB/subunit b, ATP5PD/subunit d, ATP5PO/subunit OSCP. ATP synthase complex consists of a soluble F(1) head domain (subunits alpha(3) and beta(3)) - the catalytic core - and a membrane F(0) domain - the membrane proton channel (subunits c, a, 8, e, f, g, k and j). These two domains are linked by a central stalk (subunits gamma, delta, and epsilon) rotating inside the F1 region and a stationary peripheral stalk (subunits F6, b, d, and OSCP). Interacts with TMEM70 (homooligomer form); this interaction facilitates the oligomer formation of subunit c/ATP5MC1 (c-ring) and the c-ring membrane insertion and also protects ATP5MC1 against intramitochondrial proteolysis. In terms of processing, trimethylated by ATPSCKMT at Lys-104. Methylation is required for proper incorporation of the C subunit into the ATP synthase complex and mitochondrial respiration.

It localises to the mitochondrion membrane. It catalyses the reaction H(+)(in) = H(+)(out). In terms of biological role, subunit c, of the mitochondrial membrane ATP synthase complex (F(1)F(0) ATP synthase or Complex V) that produces ATP from ADP in the presence of a proton gradient across the membrane which is generated by electron transport complexes of the respiratory chain. ATP synthase complex consist of a soluble F(1) head domain - the catalytic core - and a membrane F(1) domain - the membrane proton channel. These two domains are linked by a central stalk rotating inside the F(1) region and a stationary peripheral stalk. During catalysis, ATP synthesis in the catalytic domain of F(1) is coupled via a rotary mechanism of the central stalk subunits to proton translocation. With the subunit a (MT-ATP6), forms the proton-conducting channel in the F(0) domain, that contains two crucial half-channels (inlet and outlet) that facilitate proton movement from the mitochondrial intermembrane space (IMS) into the matrix. Protons are taken up via the inlet half-channel and released through the outlet half-channel, following a Grotthuss mechanism. This is ATP synthase F(0) complex subunit C1, mitochondrial from Ovis aries (Sheep).